A 139-amino-acid chain; its full sequence is Ribulose bisphosphate carboxylase small subunit (139 aa).

Belongs to the RuBisCO small chain family. As to quaternary structure, heterohexadecamer of 8 large and 8 small subunits.

It is found in the plastid. It localises to the chloroplast. Functionally, ruBisCO catalyzes two reactions: the carboxylation of D-ribulose 1,5-bisphosphate, the primary event in carbon dioxide fixation, as well as the oxidative fragmentation of the pentose substrate in the photorespiration process. Both reactions occur simultaneously and in competition at the same active site. Although the small subunit is not catalytic it is essential for maximal activity. This chain is Ribulose bisphosphate carboxylase small subunit, found in Ectocarpus siliculosus (Brown alga).